The following is a 506-amino-acid chain: Cytochrome P450 94B3 (506 aa).

A helical transmembrane segment spans residues Ala2 to Ser22. Position 447 (Cys447) interacts with heme.

The protein belongs to the cytochrome P450 family. Heme serves as cofactor.

Its subcellular location is the membrane. It localises to the endoplasmic reticulum membrane. The enzyme catalyses a jasmonyl-L-amino acid + reduced [NADPH--hemoprotein reductase] + O2 = a 12-hydroxyjasmonyl-L-alpha-amino acid + oxidized [NADPH--hemoprotein reductase] + H2O + H(+). The catalysed reaction is L-isoleucine-(+)-7-isojasmonate + NADPH + O2 + H(+) = L-isoleucine-(+)-12-hydroxy-7-isojasmonate + NADP(+) + H2O. It catalyses the reaction a jasmonyl-L-isoleucinate + NADPH + O2 + H(+) = L-isoleucine-12-hydroxyjasmonate + NADP(+) + H2O. Functionally, hydroxylase involved in the oxidation of the plant hormone jasmonoyl-L-isoleucine (JA-Ile), a bioactive phytohormone of the jasmonate-mediated signaling pathway. Converts JA-Ile to 12-hydroxy-JA-Ile. Exerts negative feedback control on JA-Ile levels and plays a key role in attenuation of jasmonate responses. Negatively regulates the expression of wound-induced genes TIFY11A/JAZ5, TIFY5A/JAZ8 and TIFY5A/JAZ10. Catalyzes the hydroxylation of jasmonoyl-L-valine (JA-Val), jasmonoyl-L-leucine (JA-Leu) and jasmonoyl-L-phenylalanine (JA-Phe) in vitro. Converts JA-Val, JA-Leu and JA-Phe to 12-hydroxy-JA-Val, 12-hydroxy-JA-Leu and 12-hydroxy-JA-Phe, respectively. This is Cytochrome P450 94B3 from Arabidopsis thaliana (Mouse-ear cress).